The primary structure comprises 196 residues: Imidazoleglycerol-phosphate dehydratase (196 aa).

Belongs to the imidazoleglycerol-phosphate dehydratase family.

It localises to the cytoplasm. It carries out the reaction D-erythro-1-(imidazol-4-yl)glycerol 3-phosphate = 3-(imidazol-4-yl)-2-oxopropyl phosphate + H2O. The protein operates within amino-acid biosynthesis; L-histidine biosynthesis; L-histidine from 5-phospho-alpha-D-ribose 1-diphosphate: step 6/9. The chain is Imidazoleglycerol-phosphate dehydratase from Caulobacter sp. (strain K31).